We begin with the raw amino-acid sequence, 81 residues long: MYKGIFLCVLLAVICANSLATPSSDADEDNDEVERYVRGWASKIGQTLGKIAKVGLKELIQPKREAMLRSAEAQGKRPWIL.

The signal sequence occupies residues 1–20 (MYKGIFLCVLLAVICANSLA). Residues 21–37 (TPSSDADEDNDEVERYV) constitute a propeptide that is removed on maturation. A propeptide spans 65-73 (EAMLRSAEA) (removed in mature form by a dipeptidylpeptidase).

Belongs to the gastrin/cholecystokinin family. Magainin subfamily. As to expression, XPF is synthesized in the stomach and stored in a novel granular multinucleated cell in the gastric mucosa, it is stored as active, processed peptides in large granules within the granular gland secretions of the skin.

The protein localises to the secreted. In terms of biological role, xenopsin is a neurotensin-like octapeptide. XPF has antimicrobial activity. This chain is Xenopsin peptides, found in Xenopus laevis (African clawed frog).